Reading from the N-terminus, the 2646-residue chain is Probable inactive serine/threonine-protein kinase roco10 (2646 aa).

7 disordered regions span residues 28 to 122 (LNYS…LSGG), 138 to 168 (NIPI…KDKD), 205 to 248 (PLFI…VSPS), 281 to 457 (QQQR…VKQA), 477 to 516 (MSKL…HTSP), 605 to 656 (TSPN…PHQY), and 882 to 907 (QSSS…STPS). Residues 46-56 (PQQNLLENDTL) show a composition bias toward polar residues. Composition is skewed to low complexity over residues 78–115 (IITT…TSPS), 147–161 (SPTS…NNNN), and 215–228 (SRNN…GGNK). Over residues 235–248 (KISSTSAAGDVSPS) the composition is skewed to polar residues. 2 stretches are compositionally biased toward low complexity: residues 285–297 (NGNN…NNNN) and 325–334 (NNNNNNNNNN). Residues 335–345 (KQPQHPMNGNH) show a composition bias toward polar residues. Over residues 346–394 (SPSNGTSGSLSMSGSGIDNGGNNNNNSNTHGSSSNQSSGVTSPIIQSTS) the composition is skewed to low complexity. 2 stretches are compositionally biased toward polar residues: residues 402–416 (GLNS…SSPT) and 428–443 (TSAS…PLMN). 5 stretches are compositionally biased toward low complexity: residues 444-454 (STGVSSSSSGV), 491-516 (PSSP…HTSP), 605-627 (TSPN…NSSP), 634-651 (QQQQ…NTNT), and 883-907 (SSSS…STPS). A Rho-GAP domain is found at 585–807 (SSISPISTAA…MFIQQADILF (223 aa)). LRR repeat units follow at residues 968-987 (QKLD…IKQL), 989-1011 (DLQE…ARLT), 1012-1033 (SLRT…MADF), 1040-1061 (NLEN…YTWL), 1062-1083 (KLKT…IFQI), 1085-1108 (TLEV…CTST), 1109-1131 (KLRS…INLV), 1132-1154 (ELQV…QKLT), 1155-1176 (SLTE…LLLL), 1178-1199 (NLKK…IHRM), 1201-1222 (SLIE…IVAL), 1224-1247 (KLNS…YIQK), 1248-1270 (GKEG…YRTR), 1271-1298 (IIML…SFSS), and 1303-1327 (LPSL…ILDI). One can recognise a Roc domain in the interval 1262–1474 (TNVPCYRTRI…RDIKQMIAKN (213 aa)). 3 disordered regions span residues 1293-1317 (KSSF…SNNS), 1651-1670 (NNNN…SRSM), and 1957-2026 (NNSS…KEKE). The span at 1651–1669 (NNNNSNGNNVGRGRSGSRS) shows a compositional bias: low complexity. A compositionally biased stretch (polar residues) spans 1966-1975 (PIASSRSNPK). Low complexity predominate over residues 1983 to 1996 (NLIQSNNNDNNNSL). Residues 1997–2026 (SKKDLKELAKQNKEKEKEKEKDKDKEKEKE) show a composition bias toward basic and acidic residues. A Protein kinase domain is found at 2049-2342 (FSICHFIKEI…PSKIISQLYT (294 aa)). Residues 2055-2063 (IKEIDYREI) and lysine 2094 each bind ATP. An RGS domain is found at 2412–2536 (MVVLNNKQST…FTVPTTNKNG (125 aa)).

Belongs to the protein kinase superfamily. TKL Ser/Thr protein kinase family. ROCO subfamily.

The polypeptide is Probable inactive serine/threonine-protein kinase roco10 (roco10) (Dictyostelium discoideum (Social amoeba)).